Here is a 268-residue protein sequence, read N- to C-terminus: L-gamma-glutamyl-L-propargylglycine hydroxylase (268 aa).

The cofactor is Fe(2+).

The catalysed reaction is L-gamma-glutamyl-L-propargylglycine + 2-oxoglutarate + O2 = L-gamma-glutamyl-(3R)-L-beta-ethynylserine + succinate + CO2. It participates in amino-acid metabolism. The protein operates within antibiotic biosynthesis. Functionally, involved in the biosynthesis of terminal alkyne-containing amino acids such as L-beta-ethynylserine, that are produced as antibiotics by S.cattleya. Catalyzes the hydroxylation of the dipeptide L-gamma-glutamyl-L-propargylglycine, leading to L-gamma-glutamyl-L-beta-ethynylserine. Cannot use L-propargylglycine as substrate. This Streptantibioticus cattleyicolor (strain ATCC 35852 / DSM 46488 / JCM 4925 / NBRC 14057 / NRRL 8057) (Streptomyces cattleya) protein is L-gamma-glutamyl-L-propargylglycine hydroxylase.